The following is a 431-amino-acid chain: O-phosphoseryl-tRNA(Sec) selenium transferase (431 aa).

The segment at 1 to 36 (MRGLIPDHMLERGRTVLDSYREPVERLLSERRMPEE) is tetramerization. Position 67 (R67) interacts with pyridoxal 5'-phosphate. Positions 88 to 98 (GRSGTLVDPQP) are phosphate loop (P-loop). Substrate is bound by residues R89, S90, and Q97. Residue K269 is modified to N6-(pyridoxal phosphate)lysine. R298 contacts substrate.

Belongs to the SepSecS family. Homotetramer. Pyridoxal 5'-phosphate serves as cofactor.

The catalysed reaction is O-phospho-L-seryl-tRNA(Sec) + selenophosphate + H2O = L-selenocysteinyl-tRNA(Sec) + 2 phosphate. Its pathway is aminoacyl-tRNA biosynthesis; selenocysteinyl-tRNA(Sec) biosynthesis; selenocysteinyl-tRNA(Sec) from L-seryl-tRNA(Sec) (archaeal/eukaryal route): step 2/2. Functionally, converts O-phosphoseryl-tRNA(Sec) to selenocysteinyl-tRNA(Sec) required for selenoprotein biosynthesis. In Methanopyrus kandleri (strain AV19 / DSM 6324 / JCM 9639 / NBRC 100938), this protein is O-phosphoseryl-tRNA(Sec) selenium transferase (spcS).